The primary structure comprises 361 residues: tRNA 2-selenouridine synthase (361 aa).

The Rhodanese domain occupies 11–134 (ALLERPLIDV…MRQCVNAEIE (124 aa)). Cys94 (S-selanylcysteine intermediate) is an active-site residue.

This sequence belongs to the SelU family. Monomer.

The catalysed reaction is 5-methylaminomethyl-2-thiouridine(34) in tRNA + selenophosphate + (2E)-geranyl diphosphate + H2O + H(+) = 5-methylaminomethyl-2-selenouridine(34) in tRNA + (2E)-thiogeraniol + phosphate + diphosphate. It catalyses the reaction 5-methylaminomethyl-2-thiouridine(34) in tRNA + (2E)-geranyl diphosphate = 5-methylaminomethyl-S-(2E)-geranyl-thiouridine(34) in tRNA + diphosphate. It carries out the reaction 5-methylaminomethyl-S-(2E)-geranyl-thiouridine(34) in tRNA + selenophosphate + H(+) = 5-methylaminomethyl-2-(Se-phospho)selenouridine(34) in tRNA + (2E)-thiogeraniol. The enzyme catalyses 5-methylaminomethyl-2-(Se-phospho)selenouridine(34) in tRNA + H2O = 5-methylaminomethyl-2-selenouridine(34) in tRNA + phosphate. In terms of biological role, involved in the post-transcriptional modification of the uridine at the wobble position (U34) of tRNA(Lys), tRNA(Glu) and tRNA(Gln). Catalyzes the conversion of 2-thiouridine (S2U-RNA) to 2-selenouridine (Se2U-RNA). Acts in a two-step process involving geranylation of 2-thiouridine (S2U) to S-geranyl-2-thiouridine (geS2U) and subsequent selenation of the latter derivative to 2-selenouridine (Se2U) in the tRNA chain. The sequence is that of tRNA 2-selenouridine synthase from Chromohalobacter salexigens (strain ATCC BAA-138 / DSM 3043 / CIP 106854 / NCIMB 13768 / 1H11).